The following is a 459-amino-acid chain: tRNA modification GTPase MnmE (459 aa).

(6S)-5-formyl-5,6,7,8-tetrahydrofolate is bound by residues Arg-23, Glu-88, and Arg-127. Residues 223–381 (GLDVVIVGKP…LKEYIKDLFF (159 aa)) form the TrmE-type G domain. Residue Asn-233 participates in K(+) binding. GTP-binding positions include 233-238 (NVGKSS), 252-258 (TEIPGTT), and 277-280 (DTAG). A Mg(2+)-binding site is contributed by Ser-237. K(+) is bound by residues Thr-252, Ile-254, and Thr-257. Mg(2+) is bound at residue Thr-258. Lys-459 contributes to the (6S)-5-formyl-5,6,7,8-tetrahydrofolate binding site.

This sequence belongs to the TRAFAC class TrmE-Era-EngA-EngB-Septin-like GTPase superfamily. TrmE GTPase family. In terms of assembly, homodimer. Heterotetramer of two MnmE and two MnmG subunits. The cofactor is K(+).

It localises to the cytoplasm. In terms of biological role, exhibits a very high intrinsic GTPase hydrolysis rate. Involved in the addition of a carboxymethylaminomethyl (cmnm) group at the wobble position (U34) of certain tRNAs, forming tRNA-cmnm(5)s(2)U34. This chain is tRNA modification GTPase MnmE, found in Clostridium tetani (strain Massachusetts / E88).